A 112-amino-acid chain; its full sequence is uncharacterized protein (112 aa).

This is an uncharacterized protein from Aquifex aeolicus (strain VF5).